Consider the following 117-residue polypeptide: Large ribosomal subunit protein uL18 (117 aa).

Belongs to the universal ribosomal protein uL18 family. Part of the 50S ribosomal subunit; part of the 5S rRNA/L5/L18/L25 subcomplex. Contacts the 5S and 23S rRNAs.

This is one of the proteins that bind and probably mediate the attachment of the 5S RNA into the large ribosomal subunit, where it forms part of the central protuberance. The sequence is that of Large ribosomal subunit protein uL18 from Pseudoalteromonas atlantica (strain T6c / ATCC BAA-1087).